A 658-amino-acid chain; its full sequence is Carnitine O-palmitoyltransferase 2, mitochondrial (658 aa).

A mitochondrion-targeting transit peptide spans 1 to 25; it reads MMPRLLFRAWPRCPSLVLGAPSRPL. Topologically, residues 26-178 are mitochondrial matrix; the sequence is SAVSGPDDYL…GLLEPEVFHL (153 aa). N6-succinyllysine is present on residues K69 and K85. The note=Mitochondrial inner membrane intramembrane region spans 179 to 208; it reads NPSKSDTDAFKRLIRFVPPSLSWYGAYLVN. Over 209-658 the chain is Mitochondrial matrix; the sequence is AYPLDMSQYF…DALEGKAIKT (450 aa). K239 is modified (N6-acetyllysine; alternate). Position 239 is an N6-succinyllysine; alternate (K239). At K305 the chain carries N6-acetyllysine. H372 (proton acceptor) is an active-site residue. An N6-succinyllysine mark is found at K424 and K439. CoA is bound at residue 452-464; that stretch reads GKEFLKKKQLSPD. (R)-carnitine contacts are provided by Y486, S488, and T499. Residues K510 and K544 each carry the N6-acetyllysine; alternate modification. An N6-succinyllysine; alternate mark is found at K510 and K544.

This sequence belongs to the carnitine/choline acetyltransferase family.

Its subcellular location is the mitochondrion inner membrane. The catalysed reaction is (R)-carnitine + hexadecanoyl-CoA = O-hexadecanoyl-(R)-carnitine + CoA. It carries out the reaction octanoyl-CoA + (R)-carnitine = O-octanoyl-(R)-carnitine + CoA. It catalyses the reaction decanoyl-CoA + (R)-carnitine = O-decanoyl-(R)-carnitine + CoA. The enzyme catalyses dodecanoyl-CoA + (R)-carnitine = O-dodecanoyl-R-carnitine + CoA. The catalysed reaction is tetradecanoyl-CoA + (R)-carnitine = O-tetradecanoyl-(R)-carnitine + CoA. It carries out the reaction (R)-carnitine + octadecanoyl-CoA = O-octadecanoyl-(R)-carnitine + CoA. It catalyses the reaction eicosanoyl-CoA + (R)-carnitine = O-eicosanoyl-(R)-carnitine + CoA. The enzyme catalyses (9Z)-tetradecenoyl-CoA + (R)-carnitine = O-(9Z)-tetradecenoyl-(R)-carnitine + CoA. The catalysed reaction is (5Z)-tetradecenoyl-CoA + (R)-carnitine = O-(5Z)-tetradecenoyl-(R)-carnitine + CoA. It carries out the reaction (R)-carnitine + (9Z)-octadecenoyl-CoA = O-(9Z)-octadecenoyl-(R)-carnitine + CoA. It catalyses the reaction 4,8-dimethylnonanoyl-CoA + (R)-carnitine = O-4,8-dimethylnonanoyl-(R)-carnitine + CoA. The protein operates within lipid metabolism; fatty acid beta-oxidation. Involved in the intramitochondrial synthesis of acylcarnitines from accumulated acyl-CoA metabolites. Reconverts acylcarnitines back into the respective acyl-CoA esters that can then undergo beta-oxidation, an essential step for the mitochondrial uptake of long-chain fatty acids and their subsequent beta-oxidation in the mitochondrion. Active with medium (C8-C12) and long-chain (C14-C18) acyl-CoA esters. The chain is Carnitine O-palmitoyltransferase 2, mitochondrial from Rattus norvegicus (Rat).